A 428-amino-acid polypeptide reads, in one-letter code: Chaperone SurA (428 aa).

Positions 1–20 are cleaved as a signal peptide; sequence MKNWKTLLLGIAMIANTSFA. PpiC domains follow at residues 171 to 272 and 282 to 382; these read STEL…KVND and VTEV…ELLD.

Its subcellular location is the periplasm. The catalysed reaction is [protein]-peptidylproline (omega=180) = [protein]-peptidylproline (omega=0). Functionally, chaperone involved in the correct folding and assembly of outer membrane proteins. Recognizes specific patterns of aromatic residues and the orientation of their side chains, which are found more frequently in integral outer membrane proteins. May act in both early periplasmic and late outer membrane-associated steps of protein maturation. The sequence is that of Chaperone SurA from Escherichia coli O157:H7.